The primary structure comprises 164 residues: Anthrone oxygenase AgnL2 (164 aa).

3 helical membrane passes run 11–31 (VVTGSFLSGAMISLSLMAVPV), 48–70 (RMYHYGHQVLPTMAVATTLLYAY), and 85–105 (VFALAGTITVSMIPFTWLCMV).

It belongs to the anthrone oxygenase family.

The protein localises to the membrane. It carries out the reaction emodin anthrone + O2 = emodin + H2O + H(+). It participates in secondary metabolite biosynthesis. Anthrone oxygenase; part of the gene cluster that mediates the biosynthesis of agnestins, dihydroxy-xanthone metabolites. The pathway begins with the assembly and cyclization of atrochrysone thioester by the non-reducing polyketide synthase Agnpks1. The atrochrysone carboxyl ACP thioesterase AgnL7 then breaks the thioester bond and releases the atrochrysone carboxylic acid as the first enzyme-free intermediate. The decarboxylase AgnL1 then catalyzes the concerted decarboxylation-elimination required to convert atochrysone carboxylic acid into emodin anthrone, which is further oxidized to emodin by the anthrone oxygenase AgnL2. Emodin then undergoes reduction catalyzed by the oxidoreductase AgnL4 to yield the dihydroquinone tautomer which is the substrate for reduction by the short chain dehydrogenase AgnL6 reduction to produce hydroxyketone, followed by AgnL8 dehydration and likely spontaneous autoxidation to chrysophanol. Baeyer-Villiger oxidation by the oxidase AgnL3 leads to monodictyphenone via cleavage of the C-10/C-10a bond of chrysophanol. Alternative cleavage at the C-4a/C-10 bond of chrysophanol also leads to the formation some cephalone F. Further conversion to agnestins A and B, requires reduction to dihydro-monodictyphenone, oxidation to agnestin C probably via an epoxide, and rearrangement to either agnestin A or agnestin B directly, although agnestin A or agnestin B can also interconvert. Within the cluster, AgnR1 is the only unassigned oxidoreductase present which could be involved in this conversion. However, AgnR1 seems not to be involved in this step, and thus genes involved in the proposed oxidation/reduction may be located elsewhere on the genome. Further agnestin A derivatives are probably formed by spontaneous decarboxylations, dehydrations and methanolysis reactions. The polypeptide is Anthrone oxygenase AgnL2 (Paecilomyces divaricatus (Penicillium divaricatum)).